Reading from the N-terminus, the 100-residue chain is Large ribosomal subunit protein bL21 (100 aa).

This sequence belongs to the bacterial ribosomal protein bL21 family. As to quaternary structure, part of the 50S ribosomal subunit. Contacts proteins L15 and L20.

Binds directly to 23S rRNA, probably serving to organize its structure. This is Large ribosomal subunit protein bL21 from Deinococcus radiodurans (strain ATCC 13939 / DSM 20539 / JCM 16871 / CCUG 27074 / LMG 4051 / NBRC 15346 / NCIMB 9279 / VKM B-1422 / R1).